Here is a 318-residue protein sequence, read N- to C-terminus: 2-keto-3-deoxygluconate permease (318 aa).

10 helical membrane passes run 10–30 (IPGG…TFTP), 42–62 (GLIT…GASI), 76–96 (VLVV…GAFL), 105–125 (LLAG…NGGL), 139–159 (AGAF…VILG), 162–182 (GIAT…LIGF), 199–219 (VQTL…LSVI), 224–244 (FAGI…LILA), 254–274 (TAGI…LLIA), and 289–309 (ALVA…TALW).

It belongs to the KdgT transporter family.

Its subcellular location is the cell inner membrane. The catalysed reaction is 2-dehydro-3-deoxy-D-gluconate(in) + H(+)(in) = 2-dehydro-3-deoxy-D-gluconate(out) + H(+)(out). In terms of biological role, catalyzes the proton-dependent uptake of 2-keto-3-deoxygluconate (KDG) into the cell. The sequence is that of 2-keto-3-deoxygluconate permease from Pectobacterium atrosepticum (strain SCRI 1043 / ATCC BAA-672) (Erwinia carotovora subsp. atroseptica).